The chain runs to 103 residues: UPF0134 protein MPN_484 (103 aa).

Belongs to the UPF0134 family.

The polypeptide is UPF0134 protein MPN_484 (Mycoplasma pneumoniae (strain ATCC 29342 / M129 / Subtype 1) (Mycoplasmoides pneumoniae)).